The following is a 414-amino-acid chain: Sensor protein CutS (414 aa).

Over residues 1–15 the composition is skewed to pro residues; sequence MATTPAPPGAPPKPT. The tract at residues 1–21 is disordered; the sequence is MATTPAPPGAPPKPTWDPRSA. The next 2 helical transmembrane spans lie at 37 to 57 and 121 to 141; these read LLYG…IYLL and SLLA…AMAG. Positions 142–194 constitute an HAMP domain; that stretch reads RVLSPLGRITRTARAVAGSDLSRRIELDGPDDELKELADTFDDMLERLQRAFT. Residues 202 to 414 enclose the Histidine kinase domain; it reads NASHELRTPL…GLVMRVTLPV (213 aa). His205 bears the Phosphohistidine; by autocatalysis mark.

The protein resides in the cell membrane. It catalyses the reaction ATP + protein L-histidine = ADP + protein N-phospho-L-histidine.. Member of the two-component regulatory system CutS/CutR, involved in the regulation of copper metabolism. This chain is Sensor protein CutS (cutS), found in Streptomyces coelicolor (strain ATCC BAA-471 / A3(2) / M145).